Consider the following 466-residue polypeptide: Alpha-1A adrenergic receptor (466 aa).

The Extracellular segment spans residues 1–27 (MVLLSENASEGSNCTHPPAQVNISKAI). N-linked (GlcNAc...) asparagine glycans are attached at residues Asn-7, Asn-13, and Asn-22. A helical membrane pass occupies residues 28–51 (LLGVILGGLIIFGVLGNILVILSV). Topologically, residues 52–64 (ACHRHLHSVTHYY) are cytoplasmic. Residues 65–88 (IVNLAVADLLLTSTVLPFSAIFEI) form a helical membrane-spanning segment. At 89-99 (LGYWAFGRVFC) the chain is on the extracellular side. The cysteines at positions 99 and 176 are disulfide-linked. Residues 100–122 (NIWAAVDVLCCTASIMGLCIISI) form a helical membrane-spanning segment. Residues 123 to 143 (DRYIGVSYPLRYPTIVTQRRG) lie on the Cytoplasmic side of the membrane. The chain crosses the membrane as a helical span at residues 144–167 (VRALLCVWALSLVISIGPLFGWRQ). Over 168–181 (QAPEDETICQINEE) the chain is Extracellular. Residues 182–205 (PGYVLFSALGSFYVPLTIILVMYC) form a helical membrane-spanning segment. At 206 to 273 (RVYVVAKRES…FSREKKAAKT (68 aa)) the chain is on the cytoplasmic side. Ser-215 bears the Phosphoserine; by PKA mark. The helical transmembrane segment at 274–297 (LGIVVGCFVLCWLPFFLVMPIGSF) threads the bilayer. The Extracellular segment spans residues 298-305 (FPNFKPPE). Residues 306–329 (TVFKIVFWLGYLNSCINPIIYPCS) form a helical membrane-spanning segment. Residues 330 to 466 (SQEFKKAFQN…ISLGENGEEV (137 aa)) are Cytoplasmic-facing. The short motif at 334 to 349 (KKAFQNVLRIQCLRRR) is the Nuclear localization signal element. Residue Cys-345 is the site of S-palmitoyl cysteine attachment.

The protein belongs to the G-protein coupled receptor 1 family. Adrenergic receptor subfamily. ADRA1A sub-subfamily. In terms of assembly, homo- and heterooligomer. Heterooligomerizes with ADRA1B homooligomers in cardiac myocytes. Interacts with CAVIN4.

It localises to the nucleus membrane. It is found in the cell membrane. The protein localises to the cytoplasm. The protein resides in the membrane. Its subcellular location is the caveola. Functionally, this alpha-adrenergic receptor mediates its action by association with G proteins that activate a phosphatidylinositol-calcium second messenger system. Its effect is mediated by G(q) and G(11) proteins. Nuclear ADRA1A-ADRA1B heterooligomers regulate phenylephrine (PE)-stimulated ERK signaling in cardiac myocytes. In Mus musculus (Mouse), this protein is Alpha-1A adrenergic receptor (Adra1a).